Reading from the N-terminus, the 89-residue chain is Small ribosomal subunit protein uS15 (89 aa).

Over residues 1–21 (MSIAAERKAEVIKTNARKDGD) the composition is skewed to basic and acidic residues. Residues 1–24 (MSIAAERKAEVIKTNARKDGDTGS) are disordered.

Belongs to the universal ribosomal protein uS15 family. As to quaternary structure, part of the 30S ribosomal subunit. Forms a bridge to the 50S subunit in the 70S ribosome, contacting the 23S rRNA.

Functionally, one of the primary rRNA binding proteins, it binds directly to 16S rRNA where it helps nucleate assembly of the platform of the 30S subunit by binding and bridging several RNA helices of the 16S rRNA. Its function is as follows. Forms an intersubunit bridge (bridge B4) with the 23S rRNA of the 50S subunit in the ribosome. The chain is Small ribosomal subunit protein uS15 from Rhodopseudomonas palustris (strain BisA53).